Reading from the N-terminus, the 488-residue chain is Ribulose bisphosphate carboxylase large chain (488 aa).

Substrate contacts are provided by Asn127 and Thr177. The active-site Proton acceptor is the Lys179. Lys181 is a substrate binding site. Positions 205, 207, and 208 each coordinate Mg(2+). At Lys205 the chain carries N6-carboxylysine. His297 serves as the catalytic Proton acceptor. Arg298, His330, and Ser382 together coordinate substrate.

Belongs to the RuBisCO large chain family. Type I subfamily. In terms of assembly, heterohexadecamer of 8 large chains and 8 small chains. The cofactor is Mg(2+).

The protein resides in the plastid. It is found in the chloroplast. It carries out the reaction 2 (2R)-3-phosphoglycerate + 2 H(+) = D-ribulose 1,5-bisphosphate + CO2 + H2O. The enzyme catalyses D-ribulose 1,5-bisphosphate + O2 = 2-phosphoglycolate + (2R)-3-phosphoglycerate + 2 H(+). RuBisCO catalyzes two reactions: the carboxylation of D-ribulose 1,5-bisphosphate, the primary event in carbon dioxide fixation, as well as the oxidative fragmentation of the pentose substrate in the photorespiration process. Both reactions occur simultaneously and in competition at the same active site. In Porphyridium aerugineum (Red microalga), this protein is Ribulose bisphosphate carboxylase large chain.